The sequence spans 1091 residues: Protein CTR9 homolog (1091 aa).

Ala2 bears the N-acetylalanine mark. 16 TPR repeats span residues 90-127 (GAYY…DMHE), 128-161 (PSTW…APDN), 163-195 (PALL…FPGC), 197-230 (AAVR…DPDN), 232-267 (EALV…YPYC), 305-338 (SHSF…TNNN), 343-376 (VFPY…YPDN), 377-410 (CETL…DPRD), 412-443 (QAFV…MKKG), 449-482 (IEVL…GIWI), 558-591 (IDAY…DDKN), 593-625 (NALS…TDGK), 640-673 (AAMR…HNSN), 674-707 (MYAA…ASGS), 713-746 (PDVW…FFYN), and 749-782 (SQIL…TPSN). Positions 919–1091 (FQRIKEQWKS…EEEEEEEEAN (173 aa)) are disordered. A compositionally biased stretch (basic residues) spans 951–965 (ERRRKKGGKRRKKDK). 4 stretches are compositionally biased toward acidic residues: residues 974-993 (DDEE…DEDA), 1003-1016 (MTTQ…DDDA), 1026-1035 (EDPDVDDDEV), and 1080-1091 (NMEEEEEEEEAN).

Component of the nuclear PAF1 complex (PAF1C), which consists of VIP2/ELF7/PAF1, VIP3/SKI8/WDR61, VIP4/LEO1, VIP5/RTF1, VIP6/ELF8/CTR9 and CDC73. Interacts with VIP3 and VIP4. In terms of tissue distribution, expressed in roots, leaves and shoot apex.

It is found in the nucleus. Component of the PAF1 complex (PAF1C) which is involved in histone modifications such as methylation on histone H3 'Lys-4' (H3K4me3). Involved in regulation of flowering time. Required for the expression of the MADS box genes and flowering repressors FLC, AGL27/FLM and AGL31/MAF2. Required for histone H3 trimethylation on 'Lys-4' H3K4me3 at the FLC and AGL27/FLM loci. Involved in the control of seed dormancy and germination. The polypeptide is Protein CTR9 homolog (Arabidopsis thaliana (Mouse-ear cress)).